The primary structure comprises 279 residues: Ribosomal RNA small subunit methyltransferase A (279 aa).

S-adenosyl-L-methionine contacts are provided by histidine 11, leucine 13, glycine 42, glutamate 63, aspartate 88, and asparagine 104.

It belongs to the class I-like SAM-binding methyltransferase superfamily. rRNA adenine N(6)-methyltransferase family. RsmA subfamily.

The protein localises to the cytoplasm. It catalyses the reaction adenosine(1518)/adenosine(1519) in 16S rRNA + 4 S-adenosyl-L-methionine = N(6)-dimethyladenosine(1518)/N(6)-dimethyladenosine(1519) in 16S rRNA + 4 S-adenosyl-L-homocysteine + 4 H(+). In terms of biological role, specifically dimethylates two adjacent adenosines (A1518 and A1519) in the loop of a conserved hairpin near the 3'-end of 16S rRNA in the 30S particle. May play a critical role in biogenesis of 30S subunits. The polypeptide is Ribosomal RNA small subunit methyltransferase A (Synechococcus sp. (strain JA-3-3Ab) (Cyanobacteria bacterium Yellowstone A-Prime)).